The following is a 129-amino-acid chain: MRKYETIYILQPDLSEDDIKVVADKVQDVITSYKGDFQRLEDWGIRKLAYPINKCARGRYLYLRYDGGREMIAELERRLRLDEKVLRFQSVNITNQPEKPVVEKKPVPVEAEAVESAEAVAAPAETVSE.

The protein belongs to the bacterial ribosomal protein bS6 family.

Functionally, binds together with bS18 to 16S ribosomal RNA. This Pelobacter propionicus (strain DSM 2379 / NBRC 103807 / OttBd1) protein is Small ribosomal subunit protein bS6.